A 271-amino-acid chain; its full sequence is 3-methyl-2-oxobutanoate hydroxymethyltransferase (271 aa).

Residues aspartate 53 and aspartate 92 each contribute to the Mg(2+) site. 3-methyl-2-oxobutanoate is bound by residues 53-54, aspartate 92, and lysine 120; that span reads DS. A Mg(2+)-binding site is contributed by glutamate 122. The active-site Proton acceptor is glutamate 189.

This sequence belongs to the PanB family. Homodecamer; pentamer of dimers. The cofactor is Mg(2+).

It is found in the cytoplasm. It catalyses the reaction 3-methyl-2-oxobutanoate + (6R)-5,10-methylene-5,6,7,8-tetrahydrofolate + H2O = 2-dehydropantoate + (6S)-5,6,7,8-tetrahydrofolate. Its pathway is cofactor biosynthesis; (R)-pantothenate biosynthesis; (R)-pantoate from 3-methyl-2-oxobutanoate: step 1/2. Functionally, catalyzes the reversible reaction in which hydroxymethyl group from 5,10-methylenetetrahydrofolate is transferred onto alpha-ketoisovalerate to form ketopantoate. The sequence is that of 3-methyl-2-oxobutanoate hydroxymethyltransferase from Paraburkholderia phymatum (strain DSM 17167 / CIP 108236 / LMG 21445 / STM815) (Burkholderia phymatum).